A 447-amino-acid chain; its full sequence is Imidazolonepropionase (447 aa).

Fe(3+) contacts are provided by histidine 85 and histidine 87. Zn(2+)-binding residues include histidine 85 and histidine 87. Residues arginine 94, tyrosine 157, and histidine 190 each contribute to the 4-imidazolone-5-propanoate site. Residue tyrosine 157 coordinates N-formimidoyl-L-glutamate. Histidine 255 provides a ligand contact to Fe(3+). A Zn(2+)-binding site is contributed by histidine 255. Glutamate 258 lines the 4-imidazolone-5-propanoate pocket. Aspartate 329 lines the Fe(3+) pocket. Aspartate 329 serves as a coordination point for Zn(2+). Asparagine 331 and glycine 333 together coordinate N-formimidoyl-L-glutamate. Serine 334 contacts 4-imidazolone-5-propanoate.

The protein belongs to the metallo-dependent hydrolases superfamily. HutI family. Zn(2+) serves as cofactor. The cofactor is Fe(3+).

Its subcellular location is the cytoplasm. The catalysed reaction is 4-imidazolone-5-propanoate + H2O = N-formimidoyl-L-glutamate. The protein operates within amino-acid degradation; L-histidine degradation into L-glutamate; N-formimidoyl-L-glutamate from L-histidine: step 3/3. Functionally, catalyzes the hydrolytic cleavage of the carbon-nitrogen bond in imidazolone-5-propanoate to yield N-formimidoyl-L-glutamate. It is the third step in the universal histidine degradation pathway. The polypeptide is Imidazolonepropionase (Shouchella clausii (strain KSM-K16) (Alkalihalobacillus clausii)).